The sequence spans 158 residues: Superoxide dismutase [Cu-Zn] (158 aa).

Residues His46, His48, and His63 each coordinate Cu cation. Residues Cys57 and Cys149 are joined by a disulfide bond. Residues His63, His71, His80, and Asp83 each coordinate Zn(2+). Cu cation is bound at residue His120.

This sequence belongs to the Cu-Zn superoxide dismutase family. As to quaternary structure, homodimer. The cofactor is Cu cation. Requires Zn(2+) as cofactor.

It localises to the cytoplasm. The catalysed reaction is 2 superoxide + 2 H(+) = H2O2 + O2. Destroys radicals which are normally produced within the cells and which are toxic to biological systems. The sequence is that of Superoxide dismutase [Cu-Zn] (sod-1) from Onchocerca volvulus.